Reading from the N-terminus, the 343-residue chain is MLLGGRTAYLSVLGLITAYAAFTIWYTLTAQLHNPCVYATVSIDSKDGIAAKWEVYNSTIVYAYPENGAKRFSDGLSGFDYVCRENWVNESKLDVLKNMKELHDKVRIVVGTRNCRAYLWSVQLQMITGAWLIYIAFLCLRQERRLLGPFRNQNEFLSPTGYTFNYATYTLATTVLKTHYTKFALLLCEASLRRVALSRTFKRDPIGFLCEHSAALALIGLEVGTHFVARLLVVGTVTLVHTPCSQIYPIYLKLASWGFVVAVTIVEIVAIIYEKPPKTGSSANPPTPATHGVKGLCTSCCSTVLANLCGKLVYLLLVIGAVSILLHYEQRIQIGLLGESFSS.

The N-terminal stretch at 1–31 (MLLGGRTAYLSVLGLITAYAAFTIWYTLTAQ) is a signal peptide. Residues 32 to 118 (LHNPCVYATV…VVGTRNCRAY (87 aa)) lie on the Extracellular side of the membrane. N-linked (GlcNAc...) asparagine; by host glycans are attached at residues Asn57 and Asn89. A helical transmembrane segment spans residues 119–139 (LWSVQLQMITGAWLIYIAFLC). At 140 to 213 (LRQERRLLGP…DPIGFLCEHS (74 aa)) the chain is on the cytoplasmic side. The helical transmembrane segment at 214–234 (AALALIGLEVGTHFVARLLVV) threads the bilayer. Residues 235–251 (GTVTLVHTPCSQIYPIY) are Extracellular-facing. Residues 252–272 (LKLASWGFVVAVTIVEIVAII) form a helical membrane-spanning segment. The Cytoplasmic segment spans residues 273 to 303 (YEKPPKTGSSANPPTPATHGVKGLCTSCCST). Residues 304 to 324 (VLANLCGKLVYLLLVIGAVSI) form a helical membrane-spanning segment. Over 325 to 343 (LLHYEQRIQIGLLGESFSS) the chain is Extracellular.

Belongs to the alphaherpesvirinae glycoprotein K family. In terms of assembly, interacts (via UL20 interaction region) with protein UL20 homolog (via N-terminus); this interaction probably plays a role in the coordinate transport of protein UL20 homolog and gK to the trans-Golgi network (TGN), and is required for the cell surface expression of gK. In terms of processing, N-glycosylated.

It localises to the host cell membrane. It is found in the host endosome membrane. The protein localises to the host Golgi apparatus membrane. Its function is as follows. Glycoprotein that probably modulates membrane fusion events during secondary envelopment of cytoplasmic capsids that bud into specific trans-Golgi network (TGN)-derived membranes. This is Envelope glycoprotein K (gK) from Equine herpesvirus 1 (strain Ab4p) (EHV-1).